The primary structure comprises 106 residues: Trp operon repressor homolog (106 aa).

The DNA-binding element occupies 59–82; sequence QREIQQILNTSAATITRGSNMIKI.

Belongs to the TrpR family. Homodimer.

It is found in the cytoplasm. This protein is an aporepressor. When complexed with L-tryptophan it binds the operator region of the trp operon and prevents the initiation of transcription. The polypeptide is Trp operon repressor homolog (Histophilus somni (strain 129Pt) (Haemophilus somnus)).